Here is a 314-residue protein sequence, read N- to C-terminus: SERTA domain-containing protein 2 (314 aa).

The 48-residue stretch at Tyr-33–Gly-80 folds into the SERTA domain. Disordered stretches follow at residues Lys-77–Asp-119 and Pro-181–Met-222. Polar residues predominate over residues Thr-87–Ser-97. Low complexity predominate over residues Thr-182–Thr-193. Basic and acidic residues predominate over residues Gly-210–Leu-221. Positions Thr-235–Leu-311 are required for transactivation activity. A Nuclear export signal (NES) motif is present at residues Leu-238–Leu-243.

As to quaternary structure, interacts with XPO1; which mediates nuclear export. Interacts with TFDP1; modulates transactivation activity of TFDP1/E2F complexes. Post-translationally, polyubiquitinated, which promotes proteasomal degradation. Expressed in adipose tissue.

The protein localises to the nucleus. It localises to the cytoplasm. Functionally, acts at E2F-responsive promoters as coregulator to integrate signals provided by PHD- and/or bromodomain-containing transcription factors. May act as coactivator as well as corepressor of E2F1-TFDP1 and E2F4-TFDP1 complexes on E2F consensus binding sites, which would activate or inhibit E2F-target genes expression. Modulates fat storage by down-regulating the expression of key genes involved in adipocyte lipolysis, thermogenesis and oxidative metabolism. The chain is SERTA domain-containing protein 2 (SERTAD2) from Homo sapiens (Human).